Consider the following 433-residue polypeptide: KICSTOR complex protein ITFG2 (433 aa).

Residues 19–48 (FPHAICLGDVDNDTLNELVVGDTSGKVSVY) form an FG-GAP 1; atypical repeat. Ser-104 is subject to Phosphoserine. One copy of the FG-GAP 2; atypical repeat lies at 126–155 (NTKVMLISDIDGDGCRELVVGYTDRVVRAF). At Ser-220 the chain carries Phosphoserine.

Part of the KICSTOR complex composed of KPTN, ITFG2, KICS2 and SZT2. SZT2 probably serves as a link between the other three proteins in the KICSTOR complex and may mediate the direct interaction with the GATOR complex via GATOR1. The KICSTOR complex interacts directly with the GATOR1 complex and most probably indirectly with the GATOR2 complex in an amino acid-independent manner.

The protein resides in the lysosome membrane. In terms of biological role, as part of the KICSTOR complex functions in the amino acid-sensing branch of the TORC1 signaling pathway. Recruits, in an amino acid-independent manner, the GATOR1 complex to the lysosomal membranes and allows its interaction with GATOR2 and the RAG GTPases. Functions upstream of the RAG GTPases and is required to negatively regulate mTORC1 signaling in absence of amino acids. In absence of the KICSTOR complex mTORC1 is constitutively localized to the lysosome and activated. The KICSTOR complex is also probably involved in the regulation of mTORC1 by glucose. This is KICSTOR complex protein ITFG2 from Pongo abelii (Sumatran orangutan).